Reading from the N-terminus, the 608-residue chain is Glutamine--fructose-6-phosphate aminotransferase [isomerizing] (608 aa).

Cys2 acts as the Nucleophile; for GATase activity in catalysis. The Glutamine amidotransferase type-2 domain maps to 2–217 (CGIVGYIGKK…DNEFVLMTKD (216 aa)). SIS domains lie at 284–424 (ISKE…EKGT) and 453–598 (IMKK…VDKP). The active-site For Fru-6P isomerization activity is Lys603.

Homodimer.

The protein resides in the cytoplasm. It carries out the reaction D-fructose 6-phosphate + L-glutamine = D-glucosamine 6-phosphate + L-glutamate. In terms of biological role, catalyzes the first step in hexosamine metabolism, converting fructose-6P into glucosamine-6P using glutamine as a nitrogen source. The sequence is that of Glutamine--fructose-6-phosphate aminotransferase [isomerizing] from Clostridium tetani (strain Massachusetts / E88).